Reading from the N-terminus, the 404-residue chain is Probable tRNA sulfurtransferase (404 aa).

In terms of domain architecture, THUMP spans 60 to 165 (HEVAESLKEI…DEAAYISYED (106 aa)). Residues 183 to 184 (ML), 208 to 209 (HF), Arg-265, Gly-287, and Gln-296 contribute to the ATP site.

This sequence belongs to the ThiI family.

It localises to the cytoplasm. It catalyses the reaction [ThiI sulfur-carrier protein]-S-sulfanyl-L-cysteine + a uridine in tRNA + 2 reduced [2Fe-2S]-[ferredoxin] + ATP + H(+) = [ThiI sulfur-carrier protein]-L-cysteine + a 4-thiouridine in tRNA + 2 oxidized [2Fe-2S]-[ferredoxin] + AMP + diphosphate. The catalysed reaction is [ThiS sulfur-carrier protein]-C-terminal Gly-Gly-AMP + S-sulfanyl-L-cysteinyl-[cysteine desulfurase] + AH2 = [ThiS sulfur-carrier protein]-C-terminal-Gly-aminoethanethioate + L-cysteinyl-[cysteine desulfurase] + A + AMP + 2 H(+). It functions in the pathway cofactor biosynthesis; thiamine diphosphate biosynthesis. Its function is as follows. Catalyzes the ATP-dependent transfer of a sulfur to tRNA to produce 4-thiouridine in position 8 of tRNAs, which functions as a near-UV photosensor. Also catalyzes the transfer of sulfur to the sulfur carrier protein ThiS, forming ThiS-thiocarboxylate. This is a step in the synthesis of thiazole, in the thiamine biosynthesis pathway. The sulfur is donated as persulfide by IscS. The chain is Probable tRNA sulfurtransferase from Streptococcus agalactiae serotype V (strain ATCC BAA-611 / 2603 V/R).